Here is a 114-residue protein sequence, read N- to C-terminus: NADH-ubiquinone oxidoreductase chain 3 (114 aa).

The next 3 membrane-spanning stretches (helical) occupy residues 3 to 23, 54 to 74, and 85 to 105; these read ATIL…SFWL, FFLI…LLPF, and IVIL…IYEW.

The protein belongs to the complex I subunit 3 family.

It is found in the mitochondrion membrane. The enzyme catalyses a ubiquinone + NADH + 5 H(+)(in) = a ubiquinol + NAD(+) + 4 H(+)(out). Its function is as follows. Core subunit of the mitochondrial membrane respiratory chain NADH dehydrogenase (Complex I) that is believed to belong to the minimal assembly required for catalysis. Complex I functions in the transfer of electrons from NADH to the respiratory chain. The immediate electron acceptor for the enzyme is believed to be ubiquinone. In Xenopus laevis (African clawed frog), this protein is NADH-ubiquinone oxidoreductase chain 3 (mt-nd3).